The primary structure comprises 219 residues: N-(5'-phosphoribosyl)anthranilate isomerase (219 aa).

It belongs to the TrpF family.

The catalysed reaction is N-(5-phospho-beta-D-ribosyl)anthranilate = 1-(2-carboxyphenylamino)-1-deoxy-D-ribulose 5-phosphate. It functions in the pathway amino-acid biosynthesis; L-tryptophan biosynthesis; L-tryptophan from chorismate: step 3/5. The protein is N-(5'-phosphoribosyl)anthranilate isomerase of Bradyrhizobium sp. (strain ORS 278).